The following is a 227-amino-acid chain: Adenosylcobinamide-GDP ribazoletransferase (227 aa).

5 consecutive transmembrane segments (helical) span residues 3 to 23 (CLKA…ELDF), 26 to 46 (IWAT…AVYF), 95 to 115 (GVGG…ARPE), 117 to 137 (WLDY…VAAY), and 165 to 185 (AVAA…SLFF).

This sequence belongs to the CobS family. Mg(2+) is required as a cofactor.

It localises to the cell membrane. The enzyme catalyses alpha-ribazole + adenosylcob(III)inamide-GDP = adenosylcob(III)alamin + GMP + H(+). It carries out the reaction alpha-ribazole 5'-phosphate + adenosylcob(III)inamide-GDP = adenosylcob(III)alamin 5'-phosphate + GMP + H(+). The protein operates within cofactor biosynthesis; adenosylcobalamin biosynthesis; adenosylcobalamin from cob(II)yrinate a,c-diamide: step 7/7. Functionally, joins adenosylcobinamide-GDP and alpha-ribazole to generate adenosylcobalamin (Ado-cobalamin). Also synthesizes adenosylcobalamin 5'-phosphate from adenosylcobinamide-GDP and alpha-ribazole 5'-phosphate. The polypeptide is Adenosylcobinamide-GDP ribazoletransferase (Pyrobaculum islandicum (strain DSM 4184 / JCM 9189 / GEO3)).